The sequence spans 911 residues: Disks large homolog 1 (911 aa).

The L27 domain maps to 4–64 (RKQDTQRALH…FYEVTLLDNP (61 aa)). A Phosphoserine; by CaMK2 modification is found at Ser39. Residues 70–105 (SKQCEPVQPGNPWESGSLSSAAVTSESLPGGLSPPV) are disordered. The segment covering 83–96 (ESGSLSSAAVTSES) has biased composition (polar residues). Residues Ser122, Ser138, and Ser158 each carry the phosphoserine modification. The interaction with SH3 domains stretch occupies residues 162 to 212 (PTEAVPPSSPIVPVTPALPVPAESPVVLPSTPQANPPPVLVNTDSLETPTY). PDZ domains follow at residues 224–310 (EITL…VKRR) and 318–404 (EIKL…AAKP). A required for interaction with MARCHF2 region spans residues 224 to 545 (EITLERGNSG…QAVTIVAQYR (322 aa)). At Ser232 the chain carries Phosphoserine; by CaMK2. Tyr398 is subject to Phosphotyrosine. The span at 419–441 (TNSSSQSVDNHVSPSSYLGQTPA) shows a compositional bias: polar residues. The tract at residues 419 to 443 (TNSSSQSVDNHVSPSSYLGQTPASP) is disordered. The PDZ 3 domain maps to 465 to 545 (KVVLHRGSTG…QAVTIVAQYR (81 aa)). 9 positions are modified to phosphoserine: Ser567, Ser572, Ser574, Ser578, Ser597, Ser618, Ser684, Ser687, and Ser841. Residues 580–650 (KRSLYVRALF…PSKRRVEKKE (71 aa)) form the SH3 domain. Residues 662–696 (KTRGDKGEIPDDMGSKGLKHVTSNASDSESSYHEY) are disordered. Residues 721 to 896 (TRPVIILGPM…IYNQVKQIIE (176 aa)) form the Guanylate kinase-like domain.

This sequence belongs to the MAGUK family. Homotetramer. Interacts (via guanylate kinase-like domain) with DLGAP1, DLGAP2, DLGAP3, DLGAP4 and MAP1A. Interacts (via guanylate kinase-like domain) with KIF13B. May interact with HTR2A. Interacts (via PDZ domains) with GRIA1. Interacts (via PDZ domains) with GRIN2A. Interacts (via PDZ domains) with KCND2 and KCND3. Interacts (via PDZ domains) with KCNA1, KCNA2, KCNA3 and KCNA4. Interacts (via PDZ domains) with ADGRA3. Interacts with KCNF1. Interacts with CAMK2. Interacts with cytoskeleton-associated protein EPB41. Interacts with cytoskeleton-associated protein EZR. Found in a complex with KCNA5 and CAV3. Found in a complex with APC and CTNNB1. Interacts (via PDZ domains) with APC. Interacts with CDH1 through binding to PIK3R1. Forms multiprotein complexes with CASK, LIN7A, LIN7B, LIN7C, APBA1, and KCNJ12. Interacts with TOPK. Forms a tripartite complex composed of DLG1, MPP7 and LIN7 (LIN7A or LIN7C). May interact with TJAP1. Interacts with PTEN. Interacts with FRMPD4 (via C-terminus). Interacts with LRFN1 and LRFN2. Interacts with LRFN4 and SFPQ. Interacts (via PDZ domains) with ADGRA2 (via PDZ-binding motif). Interacts with ADAM10; this interaction recruits ADAM10 to the cell membrane during long-term depression in hippocampal neurons. Interacts with DGKI (via PDZ-binding motif). Interacts (via PDZ domains) with MARCHF2 (via PDZ domain); the interaction leads to DLG1 ubiqtuitination and degradation. Interacts (via N-terminus) with MPP3; this interaction connects CADM1 with DLG1 and links CADM1 with the regulatory subunit of phosphoinositide-3-kinase (PI3K) by forming a multiprotein complex and participates in cell spreading. In terms of processing, phosphorylated by MAPK12. Phosphorylation of Ser-39 modulates transport to the plasma membrane. Phosphorylation of Ser-232 regulates association with GRIN2A. Post-translationally, ubiquitinated; by MARCHF2 which results in its degradation. As to expression, widely expressed. Strongly expressed in epithelial cells, in the small intestine it is only detected in the vili. Expressed in brain, heart (at protein level), muscle, lung and liver. In the brain it was detected in olfactory bulbs, cerebral cortex, hippocampus, and spinal cord (at protein level).

Its subcellular location is the cell membrane. The protein localises to the basolateral cell membrane. It is found in the endoplasmic reticulum membrane. It localises to the postsynaptic density. The protein resides in the synapse. Its subcellular location is the sarcolemma. The protein localises to the cell junction. It is found in the cytoplasm. It localises to the apical cell membrane. Essential multidomain scaffolding protein required for normal development. Recruits channels, receptors and signaling molecules to discrete plasma membrane domains in polarized cells. Promotes epithelial cell layer barrier function via maintaining cell-cell adhesion. May play a role in adherens junction assembly, signal transduction, cell proliferation, synaptogenesis and lymphocyte activation. Regulates the excitability of cardiac myocytes by modulating the functional expression of Kv4 channels. Functional regulator of Kv1.5 channel. During long-term depression in hippocampal neurons, it recruits ADAM10 to the plasma membrane. The protein is Disks large homolog 1 of Rattus norvegicus (Rat).